Here is a 131-residue protein sequence, read N- to C-terminus: Small ribosomal subunit protein eS17 (131 aa).

This sequence belongs to the eukaryotic ribosomal protein eS17 family.

This is Small ribosomal subunit protein eS17 (RPS17) from Theileria annulata.